Here is a 169-residue protein sequence, read N- to C-terminus: Peptide deformylase (169 aa).

Fe cation contacts are provided by cysteine 91 and histidine 133. The active site involves glutamate 134. Histidine 137 is a Fe cation binding site.

Belongs to the polypeptide deformylase family. The cofactor is Fe(2+).

It catalyses the reaction N-terminal N-formyl-L-methionyl-[peptide] + H2O = N-terminal L-methionyl-[peptide] + formate. Functionally, removes the formyl group from the N-terminal Met of newly synthesized proteins. Requires at least a dipeptide for an efficient rate of reaction. N-terminal L-methionine is a prerequisite for activity but the enzyme has broad specificity at other positions. In Erwinia tasmaniensis (strain DSM 17950 / CFBP 7177 / CIP 109463 / NCPPB 4357 / Et1/99), this protein is Peptide deformylase.